A 236-amino-acid chain; its full sequence is Methylosome subunit pICln (236 aa).

Position 2 is an N-acetylserine (Ser-2). Phosphoserine occurs at positions 95, 143, 192, 194, 197, and 209. Residues 134–158 (LHPDPEDEDSDDYDGEEYDVEAHEQ) form a disordered region. Over residues 138 to 152 (PEDEDSDDYDGEEYD) the composition is skewed to acidic residues. Position 222 is a phosphothreonine (Thr-222).

Belongs to the pICln (TC 1.A.47) family. Component of the methylosome, a 20S complex containing at least PRMT5/SKB1, WDR77/MEP50 and CLNS1A/pICln. May mediate SNRPD1 and SNRPD3 methylation. Forms a 6S pICln-Sm complex composed of CLNS1A/pICln, SNRPD1, SNRPD2, SNRPE, SNRPF and SNRPG; ring-like structure where CLNS1A/pICln mimics additional Sm proteins and which is unable to assemble into the core snRNP. Interacts with LSM10 and LSM11. Expressed in most tissues.

It is found in the cytoplasm. It localises to the cytosol. The protein resides in the nucleus. The protein localises to the cytoskeleton. Involved in both the assembly of spliceosomal snRNPs and the methylation of Sm proteins. Chaperone that regulates the assembly of spliceosomal U1, U2, U4 and U5 small nuclear ribonucleoproteins (snRNPs), the building blocks of the spliceosome, and thereby plays an important role in the splicing of cellular pre-mRNAs. Most spliceosomal snRNPs contain a common set of Sm proteins SNRPB, SNRPD1, SNRPD2, SNRPD3, SNRPE, SNRPF and SNRPG that assemble in a heptameric protein ring on the Sm site of the small nuclear RNA to form the core snRNP (Sm core). In the cytosol, the Sm proteins SNRPD1, SNRPD2, SNRPE, SNRPF and SNRPG are trapped in an inactive 6S pICln-Sm complex by the chaperone CLNS1A that controls the assembly of the core snRNP. Dissociation by the SMN complex of CLNS1A from the trapped Sm proteins and their transfer to an SMN-Sm complex triggers the assembly of core snRNPs and their transport to the nucleus. The polypeptide is Methylosome subunit pICln (Clns1a) (Rattus norvegicus (Rat)).